Reading from the N-terminus, the 173-residue chain is NADH-ubiquinone oxidoreductase chain 6 (173 aa).

The next 5 membrane-spanning stretches (helical) occupy residues 1 to 21, 27 to 47, 48 to 68, 87 to 107, and 139 to 159; these read MTYF…GVAS, YGVV…LSLG, VSFV…VVFV, VVGY…IGGL, and CGVG…FVVL.

This sequence belongs to the complex I subunit 6 family.

The protein localises to the mitochondrion membrane. It catalyses the reaction a ubiquinone + NADH + 5 H(+)(in) = a ubiquinol + NAD(+) + 4 H(+)(out). Core subunit of the mitochondrial membrane respiratory chain NADH dehydrogenase (Complex I) that is believed to belong to the minimal assembly required for catalysis. Complex I functions in the transfer of electrons from NADH to the respiratory chain. The immediate electron acceptor for the enzyme is believed to be ubiquinone. The chain is NADH-ubiquinone oxidoreductase chain 6 (MT-ND6) from Synthliboramphus hypoleucus (Guadalupe murrelet).